The sequence spans 54 residues: Photosystem II reaction center protein K (54 aa).

A propeptide spanning residues 1 to 17 is cleaved from the precursor; that stretch reads MFQISLDMISNKINLLG. A helical transmembrane segment spans residues 29–49; that stretch reads IVDVLPIIPILFFLLAFVWQA.

It belongs to the PsbK family. As to quaternary structure, PSII is composed of 1 copy each of membrane proteins PsbA, PsbB, PsbC, PsbD, PsbE, PsbF, PsbH, PsbI, PsbJ, PsbK, PsbL, PsbM, PsbT, PsbY, PsbZ, Psb30/Ycf12, at least 3 peripheral proteins of the oxygen-evolving complex and a large number of cofactors. It forms dimeric complexes.

It is found in the plastid. It localises to the chloroplast thylakoid membrane. In terms of biological role, one of the components of the core complex of photosystem II (PSII). PSII is a light-driven water:plastoquinone oxidoreductase that uses light energy to abstract electrons from H(2)O, generating O(2) and a proton gradient subsequently used for ATP formation. It consists of a core antenna complex that captures photons, and an electron transfer chain that converts photonic excitation into a charge separation. This is Photosystem II reaction center protein K from Euglena stellata.